The following is a 128-amino-acid chain: Large ribosomal subunit protein bL12 (128 aa).

It belongs to the bacterial ribosomal protein bL12 family. In terms of assembly, homodimer. Part of the ribosomal stalk of the 50S ribosomal subunit. Forms a multimeric L10(L12)X complex, where L10 forms an elongated spine to which 2 to 4 L12 dimers bind in a sequential fashion. Binds GTP-bound translation factors.

In terms of biological role, forms part of the ribosomal stalk which helps the ribosome interact with GTP-bound translation factors. Is thus essential for accurate translation. This Petrotoga mobilis (strain DSM 10674 / SJ95) protein is Large ribosomal subunit protein bL12.